A 273-amino-acid chain; its full sequence is Aquaporin NIP1-4 (273 aa).

2 helical membrane-spanning segments follow: residues 59 to 79 and 86 to 106; these read LLAE…AITV and VTFP…VYAV. The NPA 1 signature appears at 115–117; sequence NPA. 3 consecutive transmembrane segments (helical) span residues 133–155, 174–194, and 198–218; these read APAY…RLMF, SLVI…AVAT, and AVGH…VLFA. An NPA 2 motif is present at residues 227 to 229; the sequence is NPA. A helical membrane pass occupies residues 245 to 265; it reads WVYILGPFAGAAAGAWAYSLI.

Belongs to the MIP/aquaporin (TC 1.A.8) family. NIP (TC 1.A.8.12) subfamily. Expressed in leaves.

It is found in the membrane. In terms of biological role, aquaporins facilitate the transport of water and small neutral solutes across cell membranes. This chain is Aquaporin NIP1-4 (NIP1-4), found in Oryza sativa subsp. japonica (Rice).